A 790-amino-acid chain; its full sequence is DNA topoisomerase 1 (790 aa).

Composition is skewed to polar residues over residues 1–18 (MKSNPGITVIKQNASNVM), 44–54 (KLSSGALNGNS), and 61–70 (SNLSCPSPYT). The interval 1 to 196 (MKSNPGITVI…KKRPDVSASV (196 aa)) is disordered. Residues 158–167 (QEEAAADDDP) are compositionally biased toward acidic residues. Polar residues predominate over residues 168-181 (SISNRNKKSTTPAS). Interaction with DNA regions lie at residues 426–427 (KY), 490–495 (RAGNEK), and 581–583 (TAK). Residues 433–790 (SSSLKGKVTR…AMDVVLIFRF (358 aa)) form the Topo IB-type catalytic domain. Tyr-749 serves as the catalytic O-(3'-phospho-DNA)-tyrosine intermediate.

The protein belongs to the type IB topoisomerase family.

The protein resides in the nucleus. It catalyses the reaction ATP-independent breakage of single-stranded DNA, followed by passage and rejoining.. In terms of biological role, releases the supercoiling and torsional tension of DNA introduced during the DNA replication and transcription by transiently cleaving and rejoining one strand of the DNA duplex. Introduces a single-strand break via transesterification at a target site in duplex DNA. The scissile phosphodiester is attacked by the catalytic tyrosine of the enzyme, resulting in the formation of a DNA-(3'-phosphotyrosyl)-enzyme intermediate and the expulsion of a 5'-OH DNA strand. The free DNA strand then rotates around the intact phosphodiester bond on the opposing strand, thus removing DNA supercoils. Finally, in the religation step, the DNA 5'-OH attacks the covalent intermediate to expel the active-site tyrosine and restore the DNA phosphodiester backbone. This Daucus carota (Wild carrot) protein is DNA topoisomerase 1 (TOP1).